A 253-amino-acid polypeptide reads, in one-letter code: Sporulation initiation inhibitor protein Soj (253 aa).

Residues Lys11, Gly12, Gly13, Val14, Gly15, Lys16, Thr17, Thr18, Pro214, and Asn216 each coordinate ATP. Thr17 lines the Mg(2+) pocket.

This sequence belongs to the ParA family. In terms of assembly, dimerizes in the presence of ATP but not ADP; ATP-binding is required for double-stranded (ds)DNA-binding. Interacts with DnaA.

It localises to the cytoplasm. The enzyme catalyses ATP + H2O = ADP + phosphate + H(+). Functionally, acts as a spatially regulated molecular switch, capable of either inhibiting or activating the ability of DnaA to initiate DNA replication. Monomeric ADP-Soj inhibits oligomerization of DnaA on single-stranded (ss)- or double-stranded (ds)DNA, thus inhibiting DNA replication initiation; does not disassemble premade DnaA-DNA filaments. Decreases the residence time of DnaA on the chromosome at its binding sites (oriC, replication forks and (probably) promoter-binding sites). Soj forms nucleoprotein filaments in an ATP- and DNA-dependent manner. Inhibits the initiation of sporulation, Spo0J antagonizes this inhibition. Soj ultimately inhibits the activation (phosphorylation) of Spo0A. The protein is Sporulation initiation inhibitor protein Soj of Bacillus subtilis (strain 168).